The sequence spans 252 residues: Phosphate import ATP-binding protein PstB (252 aa).

The 242-residue stretch at 6-247 folds into the ABC transporter domain; it reads ITINNLNFYY…PRDKRTEDYI (242 aa). ATP is bound at residue 38–45; it reads GPSGCGKS.

It belongs to the ABC transporter superfamily. Phosphate importer (TC 3.A.1.7) family. In terms of assembly, the complex is composed of two ATP-binding proteins (PstB), two transmembrane proteins (PstC and PstA) and a solute-binding protein (PstS).

Its subcellular location is the cell membrane. It carries out the reaction phosphate(out) + ATP + H2O = ADP + 2 phosphate(in) + H(+). Functionally, part of the ABC transporter complex PstSACB involved in phosphate import. Responsible for energy coupling to the transport system. This chain is Phosphate import ATP-binding protein PstB, found in Moorella thermoacetica (strain ATCC 39073 / JCM 9320).